Reading from the N-terminus, the 248-residue chain is DNA-directed RNA polymerase subunit Rpo3 (248 aa).

This sequence belongs to the archaeal Rpo3/eukaryotic RPB3 RNA polymerase subunit family. In terms of assembly, part of the RNA polymerase complex.

Its subcellular location is the cytoplasm. It catalyses the reaction RNA(n) + a ribonucleoside 5'-triphosphate = RNA(n+1) + diphosphate. Functionally, DNA-dependent RNA polymerase (RNAP) catalyzes the transcription of DNA into RNA using the four ribonucleoside triphosphates as substrates. The protein is DNA-directed RNA polymerase subunit Rpo3 of Halobacterium salinarum (strain ATCC 29341 / DSM 671 / R1).